The following is a 459-amino-acid chain: Peptidyl-prolyl cis-trans isomerase FKBP4 (459 aa).

M1 carries the N-acetylmethionine; in peptidyl-prolyl cis-trans isomerase FKBP4; alternate modification. The interval 1–22 (MTAEETKAAESGAQSAPLRLEG) is disordered. An N-acetylthreonine; in peptidyl-prolyl cis-trans isomerase FKBP4, N-terminally processed; partial modification is found at T2. A PPIase FKBP-type 1 domain is found at 50 to 138 (GDRVFVHYTG…VFEVELFEFK (89 aa)). T143 is modified (phosphothreonine). The PPIase FKBP-type 2 domain occupies 167–253 (GALVEVALEG…KYEIHLKSFE (87 aa)). Y220 carries the post-translational modification Phosphotyrosine. Residues 267-400 (LEQSTIVKER…AQLVVCQQRI (134 aa)) are interaction with tubulin. 3 TPR repeats span residues 270–303 (STIV…LEYE), 319–352 (LASH…DSNN), and 354–386 (KGLF…YPSN). N6-acetyllysine is present on K282. R373 is subject to Omega-N-methylarginine. The segment at 423–459 (TKAKATVAAGDQPADAEMRDEPKNDVAGGQPQVEAEA) is disordered.

Homodimer. Interacts with GLMN. Associates with HSP90AA1 and HSP70 in steroid hormone receptor complexes. Also interacts with peroxisomal phytanoyl-CoA alpha-hydroxylase (PHYH). Interacts with NR3C1 and dynein. Interacts with HSF1 in the HSP90 complex. Associates with tubulin. Interacts with MAPT/TAU. Interacts (via TPR domain) with S100A1, S100A2 and S100A6; the interaction is Ca(2+) dependent. Interaction with S100A1 and S100A2 (but not with S100A6) leads to inhibition of FKBP4-HSP90 interaction. Interacts with dynein; causes partially NR3C1 transport to the nucleus.

Its subcellular location is the cytoplasm. The protein localises to the cytosol. It localises to the mitochondrion. The protein resides in the nucleus. It is found in the cytoskeleton. The enzyme catalyses [protein]-peptidylproline (omega=180) = [protein]-peptidylproline (omega=0). Its activity is regulated as follows. Inhibited by FK506. Its function is as follows. Immunophilin protein with PPIase and co-chaperone activities. Component of unligated steroid receptors heterocomplexes through interaction with heat-shock protein 90 (HSP90). May play a role in the intracellular trafficking of heterooligomeric forms of steroid hormone receptors between cytoplasm and nuclear compartments. The isomerase activity controls neuronal growth cones via regulation of TRPC1 channel opening. Also acts as a regulator of microtubule dynamics by inhibiting MAPT/TAU ability to promote microtubule assembly. May have a protective role against oxidative stress in mitochondria. This chain is Peptidyl-prolyl cis-trans isomerase FKBP4 (FKBP4), found in Bos taurus (Bovine).